The sequence spans 901 residues: HTH-type transcriptional regulator MalT (901 aa).

An ATP-binding site is contributed by 39–46 (SPAGYGKT). The HTH luxR-type domain maps to 829-894 (ELIRTSPLTQ…DAVQHAQQLL (66 aa)). A DNA-binding region (H-T-H motif) is located at residues 853–872 (NEQIAGELDVAATTIKTHIR).

Belongs to the MalT family. In terms of assembly, monomer in solution. Oligomerizes to an active state in the presence of the positive effectors ATP and maltotriose.

With respect to regulation, activated by ATP and maltotriose, which are both required for DNA binding. Its function is as follows. Positively regulates the transcription of the maltose regulon whose gene products are responsible for uptake and catabolism of malto-oligosaccharides. Specifically binds to the promoter region of its target genes, recognizing a short DNA motif called the MalT box. This Klebsiella pneumoniae subsp. pneumoniae (strain ATCC 700721 / MGH 78578) protein is HTH-type transcriptional regulator MalT.